We begin with the raw amino-acid sequence, 457 residues long: Glutamyl-tRNA reductase (457 aa).

Substrate is bound by residues 49–52 (TCNR), Ser109, 114–116 (ETQ), and Gln120. Catalysis depends on Cys50, which acts as the Nucleophile. Position 189–194 (189–194 (GAGKMG)) interacts with NADP(+).

It belongs to the glutamyl-tRNA reductase family. In terms of assembly, homodimer.

The catalysed reaction is (S)-4-amino-5-oxopentanoate + tRNA(Glu) + NADP(+) = L-glutamyl-tRNA(Glu) + NADPH + H(+). Its pathway is porphyrin-containing compound metabolism; protoporphyrin-IX biosynthesis; 5-aminolevulinate from L-glutamyl-tRNA(Glu): step 1/2. Catalyzes the NADPH-dependent reduction of glutamyl-tRNA(Glu) to glutamate 1-semialdehyde (GSA). In Oceanobacillus iheyensis (strain DSM 14371 / CIP 107618 / JCM 11309 / KCTC 3954 / HTE831), this protein is Glutamyl-tRNA reductase.